A 118-amino-acid polypeptide reads, in one-letter code: Beta-defensin 126 (118 aa).

Positions 1–20 (MKSLLFTLAVFMLLAQLVSG) are cleaved as a signal peptide. Residues 21–63 (SWYVKKCLNDVGICKKKCKPEELHVKNGWAMCGKQRDCCVPAD) are in vitro binds to LPS, mediates antimicrobial activity and inhibits LPS-mediated inflammation. Cystine bridges form between Cys-27–Cys-58, Cys-34–Cys-52, and Cys-38–Cys-59.

Belongs to the beta-defensin family. As to quaternary structure, homodimer or homooligomer; disulfide-linked. O-glycosylated; glycans contain alpha(2,3)-linked sialic acids.

The protein resides in the secreted. Its function is as follows. Highly glycosylated atypical beta-defensin involved in several aspects of sperm function. Facilitates sperm transport in the female reproductive tract and contributes to sperm protection against immunodetection; both functions are probably implicating the negative surface charge provided by its O-linked oligosaccharides in the sperm glycocalyx. Involved in binding of sperm to oviductal epithelial cells to form a sperm reservoir until ovulation. Release from the sperm surface during capacitation and ovaluation by an elevation of oviductal fluid pH is unmasking other surface components and allows sperm to penetrate the cumulus matrix and bind to the zona pellucida of the oocyte. In vitro has antimicrobial activity and may inhibit LPS-mediated inflammation. This is Beta-defensin 126 (DEFB126) from Pongo pygmaeus (Bornean orangutan).